Here is a 334-residue protein sequence, read N- to C-terminus: D-fructose 1,6-bisphosphatase class 2/sedoheptulose 1,7-bisphosphatase (334 aa).

D33, E57, D85, and E88 together coordinate Mn(2+). Residues 88-90 (EGT), Y119, 164-166 (RAR), and 186-188 (DGD) each bind substrate. E213 is a binding site for Mn(2+).

Belongs to the FBPase class 2 family. Homotetramer. Mn(2+) serves as cofactor.

It carries out the reaction beta-D-fructose 1,6-bisphosphate + H2O = beta-D-fructose 6-phosphate + phosphate. It catalyses the reaction D-sedoheptulose 1,7-bisphosphate + H2O = D-sedoheptulose 7-phosphate + phosphate. The protein operates within carbohydrate biosynthesis; Calvin cycle. Functionally, catalyzes the hydrolysis of fructose 1,6-bisphosphate (Fru 1,6-P2) and sedoheptulose 1,7-bisphosphate (Sed 1,7-P2) to fructose 6-phosphate and sedoheptulose 7-phosphate, respectively. The protein is D-fructose 1,6-bisphosphatase class 2/sedoheptulose 1,7-bisphosphatase of Synechococcus sp. (strain CC9311).